The following is a 515-amino-acid chain: Synaptic vesicular amine transporter (515 aa).

Residues 1–20 (MALSDLVLLRWLRDSRHSRK) are Cytoplasmic-facing. The chain crosses the membrane as a helical span at residues 21 to 41 (LILFIVFLALLLDNMLLTVVV). The Lumenal, vesicle segment spans residues 42 to 130 (PIIPSYLYSI…EDRDLLNENV (89 aa)). Asparagine 56, asparagine 80, asparagine 81, asparagine 89, and asparagine 111 each carry an N-linked (GlcNAc...) asparagine glycan. Cysteine 118 and cysteine 325 are joined by a disulfide. Residues 131-151 (QVGLLFASKATVQLLTNPFIG) traverse the membrane as a helical segment. At 152–160 (LLTNRIGYP) the chain is on the cytoplasmic side. Residues 161–181 (IPMFAGFCIMFISTVMFAFSS) form a helical membrane-spanning segment. Residues 182-190 (SYAFLLIAR) are Lumenal, vesicle-facing. The helical transmembrane segment at 191 to 211 (SLQGIGSSCSSVAGMGMLASV) threads the bilayer. Over 212-220 (YTDDEERGK) the chain is Cytoplasmic. A helical membrane pass occupies residues 221 to 243 (PMGIALGGLAMGVLVGPPFGSVL). Serotonin-binding residues include leucine 229 and valine 233. The Lumenal, vesicle portion of the chain corresponds to 244 to 249 (YEFVGK). The helical transmembrane segment at 250–272 (TAPFLVLAALVLLDGAIQLFVLQ) threads the bilayer. Residues 273–292 (PSRVQPESQKGTPLTTLLKD) lie on the Cytoplasmic side of the membrane. The chain crosses the membrane as a helical span at residues 293-312 (PYILIAAGSICFANMGIAML). Serotonin is bound by residues asparagine 306, isoleucine 309, glutamate 313, phenylalanine 335, and tyrosine 342. The Lumenal, vesicle segment spans residues 313–329 (EPALPIWMMETMCSRKW). A helical membrane pass occupies residues 330–353 (QLGVAFLPASISYLIGTNIFGILA). Topologically, residues 354 to 358 (HKMGR) are cytoplasmic. Residues 359-379 (WLCALLGMVIVGISILCIPFA) traverse the membrane as a helical segment. Residues 380-390 (KNIYGLIAPNF) are Lumenal, vesicle-facing. The helical transmembrane segment at 391-411 (GVGFAIGMVDSSMMPIMGYLV) threads the bilayer. Aspartate 400 is a binding site for serotonin. Over 412–415 (DLRH) the chain is Cytoplasmic. A helical membrane pass occupies residues 416-436 (VSVYGSVYAIADVAFCMGYAI). Residue tyrosine 434 participates in serotonin binding. The Lumenal, vesicle segment spans residues 437–441 (GPSAG). The helical transmembrane segment at 442 to 463 (GAIAKAIGFPWLMTIIGIIDIA) threads the bilayer. Residues 464–515 (FAPLCFFLRSPPAKEEKMAILMDHNCPIKRKMYTQNNVQSYPIGDDEESESD) are Cytoplasmic-facing. Residues serine 512 and serine 514 each carry the phosphoserine; by CK2 modification.

The protein belongs to the major facilitator superfamily. Vesicular transporter family. Interacts with SLC6A3. Expressed in the substantia nigra and the tuberomammillary nucleus of the posterior hypothalamus. Expressed in stomach, in particular in varicose nerve fibers and enterochromaffin-like cells in the corpus region (at protein level).

It localises to the cytoplasmic vesicle. The protein resides in the secretory vesicle. It is found in the synaptic vesicle membrane. Its subcellular location is the secretory vesicle membrane. The protein localises to the cell projection. It localises to the axon. The protein resides in the dendrite. It carries out the reaction serotonin(in) + 2 H(+)(out) = serotonin(out) + 2 H(+)(in). It catalyses the reaction dopamine(in) + 2 H(+)(out) = dopamine(out) + 2 H(+)(in). The catalysed reaction is histamine(in) + 2 H(+)(out) = histamine(out) + 2 H(+)(in). Strongly inhibited by reserpine and tetrabenazine. Also inhibited to a lesser extent by ketanserin and fenfluramine. Reserpine and ketanserin inhibit by blocking the substrate-binding pocket. Tetrabenazine traps SLC18A2/VMAT2 in an occluded conformation and its inhibition is specific to SLC18A2/VMAT2 but not SLC18A1/VMAT1. Functionally, electrogenic antiporter that exchanges one cationic monoamine with two intravesicular protons across the membrane of secretory and synaptic vesicles. Uses the electrochemical proton gradient established by the V-type proton-pump ATPase to accumulate high concentrations of monoamines inside the vesicles prior to their release via exocytosis. Transports a variety of catecholamines such as dopamine, adrenaline and noradrenaline, histamine, and indolamines such as serotonin. Regulates the transvesicular monoaminergic gradient that determines the quantal size. Mediates somatodendritic dopamine release in hippocampal neurons, likely as part of a regulated secretory pathway that integrates retrograde synaptic signals. Acts as a primary transporter for striatal dopamine loading ensuring impulse-dependent release of dopamine at the synaptic cleft. Responsible for histamine and serotonin storage and subsequent corelease from mast cell granules. The sequence is that of Synaptic vesicular amine transporter (Slc18a2) from Rattus norvegicus (Rat).